A 447-amino-acid chain; its full sequence is Na(+)-translocating NADH-quinone reductase subunit A (447 aa).

This sequence belongs to the NqrA family. As to quaternary structure, composed of six subunits; NqrA, NqrB, NqrC, NqrD, NqrE and NqrF.

It carries out the reaction a ubiquinone + n Na(+)(in) + NADH + H(+) = a ubiquinol + n Na(+)(out) + NAD(+). Functionally, NQR complex catalyzes the reduction of ubiquinone-1 to ubiquinol by two successive reactions, coupled with the transport of Na(+) ions from the cytoplasm to the periplasm. NqrA to NqrE are probably involved in the second step, the conversion of ubisemiquinone to ubiquinol. This Neisseria gonorrhoeae (strain ATCC 700825 / FA 1090) protein is Na(+)-translocating NADH-quinone reductase subunit A.